Here is a 329-residue protein sequence, read N- to C-terminus: U5 small nuclear ribonucleoprotein TSSC4 (329 aa).

Disordered stretches follow at residues 1–88 (MAEA…MSST) and 104–156 (ARRA…PDYV). The segment covering 22–41 (DTLPSDTVSLSDSDSDLSLP) has biased composition (low complexity). Phosphoserine is present on residues serine 60, serine 67, serine 86, serine 132, serine 143, and serine 146. The hom2; mediates interaction with the U5 snRNP complexes and required for spliceosomal tri-snRNP complex assembly stretch occupies residues 77-104 (VQPFHLRGMSSTFSQRSRDIFDCLEGAA). An interaction with SNRNP200 region spans residues 149–316 (VPPVPDYVAH…SRKRSRDHFR (168 aa)). The segment at 150-186 (PPVPDYVAHPERWTKYSLEDVTEVSEQSNQATALAFL) is hom3; mediates interaction with the U5 snRNP complexes. A hom4; necessary for interaction with the PRPF19 complex and required for spliceosomal tri-snRNP complex assembly region spans residues 201–250 (FNQDPSSCGEGRVIFTKPVRGVEARHERKRVLGKVGEPGRGGLGNPATDR). Lysine 217 carries the post-translational modification N6-acetyllysine. The segment at 221–329 (GVEARHERKR…SSPEDPGAEV (109 aa)) is disordered. Serine 265 is subject to Phosphoserine. The segment covering 306 to 317 (GSRKRSRDHFRN) has biased composition (basic residues). Position 321 is a phosphoserine (serine 321).

It belongs to the TSSC4 family. As to quaternary structure, interacts in a RNA-independent manner with distinct U5 snRNP-containing complexes, the mono-U5 snRNP and the post-splicing U5 snRNP-PRPF19 complex. Interacts with SNRNP200; the interaction is direct, excludes recruitment of C9ORF78 and WBP4 to SNRNP200 and negatively regulates its RNA helicase activity. Interacts with PRPF8; the interaction is direct. Expressed in fetal brain, lung, liver and kidney. Widely expressed in adult tissues.

It localises to the nucleus. The protein localises to the cytoplasm. Functionally, protein associated with the U5 snRNP, during its maturation and its post-splicing recycling and which is required for spliceosomal tri-snRNP complex assembly in the nucleus. Has a molecular sequestering activity and transiently hinders SNRNP200 binding sites for constitutive splicing factors that intervene later during the assembly of the spliceosome and splicing. Together with its molecular sequestering activity, may also function as a molecular adapter and placeholder, coordinating the assembly of the U5 snRNP and its association with the U4/U6 di-snRNP. In Homo sapiens (Human), this protein is U5 small nuclear ribonucleoprotein TSSC4.